We begin with the raw amino-acid sequence, 104 residues long: uncharacterized protein (104 aa).

This is an uncharacterized protein from Mycobacterium tuberculosis (strain CDC 1551 / Oshkosh).